The sequence spans 238 residues: Large ribosomal subunit protein uL1 (238 aa).

Residues 217-238 (TNGPGVPVDETIQKNYADDAEA) form a disordered region.

This sequence belongs to the universal ribosomal protein uL1 family. As to quaternary structure, part of the 50S ribosomal subunit.

Binds directly to 23S rRNA. The L1 stalk is quite mobile in the ribosome, and is involved in E site tRNA release. Functionally, protein L1 is also a translational repressor protein, it controls the translation of the L11 operon by binding to its mRNA. The sequence is that of Large ribosomal subunit protein uL1 from Corynebacterium urealyticum (strain ATCC 43042 / DSM 7109).